Here is a 373-residue protein sequence, read N- to C-terminus: NAD(P)H-quinone oxidoreductase subunit 1 (373 aa).

Helical transmembrane passes span 28 to 48 (LLWLPLPMLLVLVAAVVGVLV), 98 to 118 (LLFTLGPVLVVVPVIISWLII), 129 to 149 (VGVGIFLWISFSSIQPIGLLM), 177 to 197 (LALAVLAIVMMTNSLSTVDIV), 205 to 225 (ILSWNIWRQPVGFLIFWICAL), 267 to 287 (VLSAVLVSVLYLGGWGFPIPV), 309 to 329 (TVGIVMTVLKAYLLVFVAILL), and 348 to 368 (FLLPLSLVNLLVTAALKLAFP).

This sequence belongs to the complex I subunit 1 family. As to quaternary structure, NDH-1 is composed of at least 11 different subunits.

The protein localises to the cellular thylakoid membrane. It catalyses the reaction a plastoquinone + NADH + (n+1) H(+)(in) = a plastoquinol + NAD(+) + n H(+)(out). It carries out the reaction a plastoquinone + NADPH + (n+1) H(+)(in) = a plastoquinol + NADP(+) + n H(+)(out). NDH-1 shuttles electrons from an unknown electron donor, via FMN and iron-sulfur (Fe-S) centers, to quinones in the respiratory and/or the photosynthetic chain. The immediate electron acceptor for the enzyme in this species is believed to be plastoquinone. Couples the redox reaction to proton translocation, and thus conserves the redox energy in a proton gradient. The sequence is that of NAD(P)H-quinone oxidoreductase subunit 1 from Synechococcus sp. (strain CC9605).